We begin with the raw amino-acid sequence, 20 residues long: ISSRVSXLTIHPLRNIMDML.

This sequence belongs to the peptidase A1 family. Glycosylated.

It localises to the secreted. The chain is Pregnancy-associated glycoprotein 57 from Ovis aries (Sheep).